Reading from the N-terminus, the 165-residue chain is Large ribosomal subunit protein uL10 (165 aa).

This sequence belongs to the universal ribosomal protein uL10 family. Part of the ribosomal stalk of the 50S ribosomal subunit. The N-terminus interacts with L11 and the large rRNA to form the base of the stalk. The C-terminus forms an elongated spine to which L12 dimers bind in a sequential fashion forming a multimeric L10(L12)X complex.

Its function is as follows. Forms part of the ribosomal stalk, playing a central role in the interaction of the ribosome with GTP-bound translation factors. This Salmonella agona (strain SL483) protein is Large ribosomal subunit protein uL10.